A 274-amino-acid polypeptide reads, in one-letter code: Proliferating cell nuclear antigen 1 (274 aa).

The DNA-binding element occupies 61–80 (RCDRERVLGVNIASLNKVFK).

It belongs to the PCNA family. In terms of assembly, homotrimer. Interacts with ORC1 (via PIP-box motif); the interaction occurs during DNA replication in trophozoites. Interacts with ORC5; the interaction occurs during the trophozoite stage but not at the late schizont stage. Interacts with FEN1.

The protein localises to the nucleus. Its subcellular location is the chromosome. It is found in the cytoplasm. Auxiliary protein of DNA polymerase delta and is involved in the control of DNA replication by increasing the polymerase processibility during elongation of the leading strand. Involved in DNA damage response. This Plasmodium falciparum (isolate 3D7) protein is Proliferating cell nuclear antigen 1.